The sequence spans 180 residues: F17 fimbrial protein (180 aa).

Residues 1–21 (MQKIQFILGILAAASSSATLA) form the signal peptide. A disulfide bond links Cys37 and Cys77.

It belongs to the fimbrial protein family.

Its subcellular location is the fimbrium. Fimbriae (also called pili), polar filaments radiating from the surface of the bacterium to a length of 0.5-1.5 micrometers and numbering 100-300 per cell, enable bacteria to colonize the epithelium of specific host organs. The protein is F17 fimbrial protein (F17a-A) of Escherichia coli.